We begin with the raw amino-acid sequence, 1616 residues long: Replicase large subunit (1616 aa).

The methyltransferase stretch occupies residues 50 to 441 (FSKVVSEEQT…INGVTARSEW (392 aa)). The 210-residue stretch at 72-281 (TFYNTQNAVH…HSYSNILKYV (210 aa)) folds into the Alphavirus-like MT domain. In terms of domain architecture, (+)RNA virus helicase ATP-binding spans 801–963 (VVYSDMAKLR…KLEVDEVETR (163 aa)). Positions 830 to 1085 (LVDGVPGCGK…RHTKSLKYYT (256 aa)) are helicase. 833 to 840 (GVPGCGKT) serves as a coordination point for ATP. Residues 964–1116 (RTTLRCPADV…DMYKVDAGTQ (153 aa)) form the (+)RNA virus helicase C-terminal domain. The RdRp catalytic domain maps to 1380 to 1493 (MDVLELDVSK…YFPKGCEYPD (114 aa)).

Belongs to the ssRNA positive-strand viruses RNA-directed RNA polymerase family. As to quaternary structure, heterodimer of a large and a small subunit.

It carries out the reaction RNA(n) + a ribonucleoside 5'-triphosphate = RNA(n+1) + diphosphate. It catalyses the reaction ATP + H2O = ADP + phosphate + H(+). In terms of biological role, is an RNA-dependent RNA polymerase active in viral RNA replication. Functionally, is a methyltransferase active in RNA capping and an RNA helicase. Methyltransferase displays a cytoplasmic capping enzyme activity. This function is necessary since all viral RNAs are synthesized in the cytoplasm, and host capping enzymes are restricted to the nucleus. Helicase region probably exhibits NTPase and RNA unwinding activities (Potential). It also acts as a suppressor of RNA-mediated gene silencing, also known as post-transcriptional gene silencing (PTGS), a mechanism of plant viral defense that limits the accumulation of viral RNAs. May mediate silencing suppression through either inhibition of HEN1-mediated siRNA or siRNA demethylation. The sequence is that of Replicase large subunit from Antirrhinum majus (Garden snapdragon).